Consider the following 620-residue polypeptide: MSVTTSFGIWLNHINLDNQASFLYNNPHFCNRRFNRISMLRTVSLARNRLRSETPSSFLARDRLRSKTPSSSPFSSKRHTPKTSEIEEESTPKDSVLLNPKDPSSAPKLFLVQPRLAPPKYLQAKLNEALCLANSLEEQRYGYFESDFFDKELPSHVVVQNPVRRSSKPRVDTYFGSGTVDNIKCHLNAEDSKEEVDAVFVNAILTAIQQRNLERIWAKPVLDRVGLIIEIFNAHAHTKEAKLQAELAALMYNKSRLVRVRGTDGRHTFGQFGEAEVVSARGRAGSKGTGGGFVGGAGETELQLQRRRISDRRIRLLSQIKEAQRTRLLQRAGRKKRVGLEGESSGTIAVVGYTNAGKSTLISALTKTALYCNERLFATLDPTLKSAHLPSGNFVLLSDTVGFISDLPIQLVKAFQSTLEEVVEADLLLHVVDSTAPNIEEHRSTVLHVLNQIGVPEEKLQNMIEVWNKIDYEEDEVEEEKYLDDGEGVGEEDEDEADLKAEETVDASEATVDEDQIQNGDGDDADGWLLSEDENADDPEFWKVPEVAKVDAANKKGPDVRVSALTGVGLKELLYLIDDKMKEKKLKSPTIVERSELHKRKWRPPRNDDEEERLIPLDQR.

A chloroplast-targeting transit peptide spans 1-65 (MSVTTSFGIW…SSFLARDRLR (65 aa)). The tract at residues 57-100 (SFLARDRLRSKTPSSSPFSSKRHTPKTSEIEEESTPKDSVLLNP) is disordered. One can recognise a Hflx-type G domain in the interval 346–585 (GTIAVVGYTN…LIDDKMKEKK (240 aa)). GTP is bound by residues 352-359 (GYTNAGKS), 377-381 (FATLD), 399-402 (DTVG), and 468-471 (NKID). 2 residues coordinate Mg(2+): serine 359 and threonine 379. 2 stretches are compositionally biased toward acidic residues: residues 478–497 (EEEKYLDDGEGVGEEDEDEA) and 511–521 (TVDEDQIQNGD). Residues 478 to 521 (EEEKYLDDGEGVGEEDEDEADLKAEETVDASEATVDEDQIQNGD) are disordered. 563 to 565 (SAL) is a binding site for GTP. The interval 597 to 620 (LHKRKWRPPRNDDEEERLIPLDQR) is disordered.

The protein belongs to the TRAFAC class OBG-HflX-like GTPase superfamily. HflX GTPase family. Requires Mg(2+) as cofactor.

The protein resides in the plastid. It localises to the chloroplast. This chain is GTP-binding protein At3g49725, chloroplastic, found in Arabidopsis thaliana (Mouse-ear cress).